A 97-amino-acid chain; its full sequence is Protein RnfH (97 aa).

Belongs to the UPF0125 (RnfH) family.

The sequence is that of Protein RnfH from Aliivibrio salmonicida (strain LFI1238) (Vibrio salmonicida (strain LFI1238)).